The sequence spans 95 residues: Ribonuclease kappa (95 aa).

A run of 2 helical transmembrane segments spans residues 12-32 and 68-88; these read GLII…FFYI and CWIA…QFYM.

The protein belongs to the RNase K family.

The protein resides in the membrane. Its function is as follows. Endoribonuclease. In terms of biological role, (Microbial infection) Required for the initial stages of clathrin-mediated endocytic uptake of a diverse set of flaviviruses, including dengue and West Nile. Not required for clathrin-mediated endocytosis and macropinocytosis. The chain is Ribonuclease kappa from Drosophila melanogaster (Fruit fly).